A 94-amino-acid chain; its full sequence is Co-chaperonin GroES (94 aa).

Belongs to the GroES chaperonin family. As to quaternary structure, heptamer of 7 subunits arranged in a ring. Interacts with the chaperonin GroEL.

It localises to the cytoplasm. Its function is as follows. Together with the chaperonin GroEL, plays an essential role in assisting protein folding. The GroEL-GroES system forms a nano-cage that allows encapsulation of the non-native substrate proteins and provides a physical environment optimized to promote and accelerate protein folding. GroES binds to the apical surface of the GroEL ring, thereby capping the opening of the GroEL channel. In Limosilactobacillus reuteri (strain DSM 20016) (Lactobacillus reuteri), this protein is Co-chaperonin GroES.